Here is a 513-residue protein sequence, read N- to C-terminus: Sodium/potassium/calcium exchanger 5 (513 aa).

The signal sequence occupies residues 1-35 (MRTDVFLQRRKRRDVLLSIIALLLLIFAIVHLVFC). Residues 36-78 (AGLSFQGSSSARVRRDLENASECVQPQSSEFPEGFFTVQERKD) lie on the Extracellular side of the membrane. A helical membrane pass occupies residues 79–99 (GGILIYFMIIFYMLLSVSIVC). The Cytoplasmic portion of the chain corresponds to 100–123 (DEYFLPSLEVISERLGLSQDVAGA). A helical membrane pass occupies residues 124–144 (TFMAAGSSAPELVTAFLGVFV). Topologically, residues 145–148 (TKGD) are extracellular. The helical transmembrane segment at 149–169 (IGVSTIMGSAVYNLLCICAAC) threads the bilayer. The Cytoplasmic portion of the chain corresponds to 170 to 181 (GLLSSAVGRLSC). The helical transmembrane segment at 182-202 (WPLFRDCVAYAISVAAVIAII) threads the bilayer. Residues 203–207 (SDNRV) lie on the Extracellular side of the membrane. The helical transmembrane segment at 208–228 (YWYDGACLLLVYGVYVAVLCF) threads the bilayer. The Cytoplasmic portion of the chain corresponds to 229–315 (DLRISEYVMQ…KSVFSMPDHD (87 aa)). The chain crosses the membrane as a helical span at residues 316-336 (LKRILWVLSLPVSTLLFVSVP). Topologically, residues 337 to 350 (DCRRPFWKNFYMLT) are extracellular. Residues 351–371 (FLMSAVWISAFTYVLVWMVTI) traverse the membrane as a helical segment. The Cytoplasmic segment spans residues 372 to 381 (VGETLGIPDT). Residues 382 to 402 (VMGMTLLAAGTSIPDTVASVM) form a helical membrane-spanning segment. Topologically, residues 403–420 (VAREGKSDMAMSNIVGSN) are extracellular. Residues 421–441 (VFDMLCLGLPWFIQTVFVDVG) form a helical membrane-spanning segment. Over 442 to 450 (SPVEVNSSG) the chain is Cytoplasmic. The helical transmembrane segment at 451-471 (LVFMSCTLLLSIIFLFLAVHI) threads the bilayer. Over 472-482 (NGWKLDWKLGL) the chain is Extracellular. Residues 483–503 (VCLACYILFATLSILYELGII) traverse the membrane as a helical segment. At 504 to 513 (GNNPIRSCSD) the chain is on the cytoplasmic side.

Belongs to the Ca(2+):cation antiporter (CaCA) (TC 2.A.19) family. SLC24A subfamily. Highly expressed in melanin-producing cells. Colocalizes with melanin biosynthesis marker dct.

It localises to the golgi apparatus. The protein resides in the trans-Golgi network membrane. The protein localises to the melanosome. It catalyses the reaction Ca(2+)(out) + K(+)(out) + 4 Na(+)(in) = Ca(2+)(in) + K(+)(in) + 4 Na(+)(out). Calcium, potassium:sodium antiporter that transports 1 Ca(2+) and 1 K(+) to the melanosome in exchange for 4 cytoplasmic Na(+). Involved in pigmentation, possibly by participating in ion transport in melanosomes. Predominant sodium-calcium exchanger in melanocytes. In Danio rerio (Zebrafish), this protein is Sodium/potassium/calcium exchanger 5 (slc24a5).